The primary structure comprises 215 residues: Myelin protein zero-like protein 2 (215 aa).

Positions 1–26 are cleaved as a signal peptide; it reads MYGKSPALVLPLLLSLQLTALCPTEA. The Ig-like V-type domain occupies 27–141; the sequence is VEIYTSGALE…DGLVGTIRLS (115 aa). At 27–154 the chain is on the extracellular side; the sequence is VEIYTSGALE…TVPFSEIYFL (128 aa). 2 N-linked (GlcNAc...) asparagine glycosylation sites follow: Asn39 and Asn118. A disulfide bond links Cys47 and Cys123. Residues 155–175 form a helical membrane-spanning segment; sequence AVAIGSACALMIIVVIVVVLF. At 176–215 the chain is on the cytoplasmic side; the sequence is QHFRKKRWADRADKAEGTKSKEEEKLNQGNKVSVFVEDTD. Basic and acidic residues predominate over residues 187–201; sequence ADKAEGTKSKEEEKL. The interval 187-215 is disordered; the sequence is ADKAEGTKSKEEEKLNQGNKVSVFVEDTD.

Belongs to the myelin P0 protein family. Widely expressed. Expressed in the cochlea, in Deiters' cells, possibly at contact sites with the basilar membrane. Expressed in both outer and inner auditory hair cells. In the stria vascularis, detected in the basal cell layer. Not detected in thymocytes, lymphocytes, macrophage or dendritic cells.

The protein localises to the membrane. Functionally, mediates homophilic cell-cell adhesion. This is Myelin protein zero-like protein 2 (Mpzl2) from Mus musculus (Mouse).